The chain runs to 279 residues: MNITLGYIDPVAFSLGPIQVRWYGIIIACGILLGYFIAQAALKQVGLHKDTLIDIIFYSAIVGFIVARIYFVTFQWPYYMNHLSEIPKIWHGGIAIHGGLIGGLISGIIVCKIKNLHPFQIGDIVAPSIILAQGIGRWGNFMNHEAHGGPVSRAFLEHLHLPDFIIRNMYIEGQYYHPTFLYESIWDVIGFVILITLRKRLKLGETFFGYLIWYSVGRFFVEAMRTDSLMLTSHIRVAQLVSVVLILISVIFVIYRRVKYQPIKYENSGPLTWPIKKAK.

The next 3 membrane-spanning stretches (helical) occupy residues 22-42, 52-72, and 89-109; these read WYGIIIACGILLGYFIAQAAL, LIDIIFYSAIVGFIVARIYFV, and IWHGGIAIHGGLIGGLISGII. An a 1,2-diacyl-sn-glycero-3-phospho-(1'-sn-glycerol)-binding site is contributed by R137. Transmembrane regions (helical) follow at residues 203-223 and 235-255; these read LGETFFGYLIWYSVGRFFVEA and IRVAQLVSVVLILISVIFVIY.

Belongs to the Lgt family.

Its subcellular location is the cell membrane. It catalyses the reaction L-cysteinyl-[prolipoprotein] + a 1,2-diacyl-sn-glycero-3-phospho-(1'-sn-glycerol) = an S-1,2-diacyl-sn-glyceryl-L-cysteinyl-[prolipoprotein] + sn-glycerol 1-phosphate + H(+). It participates in protein modification; lipoprotein biosynthesis (diacylglyceryl transfer). Functionally, catalyzes the transfer of the diacylglyceryl group from phosphatidylglycerol to the sulfhydryl group of the N-terminal cysteine of a prolipoprotein, the first step in the formation of mature lipoproteins. In Staphylococcus epidermidis (strain ATCC 12228 / FDA PCI 1200), this protein is Phosphatidylglycerol--prolipoprotein diacylglyceryl transferase.